We begin with the raw amino-acid sequence, 316 residues long: Small ribosomal subunit biogenesis GTPase RsgA (316 aa).

Positions 83 to 248 (DQYKSKLFAA…LIDSPGFQEF (166 aa)) constitute a CP-type G domain. GTP contacts are provided by residues 131–134 (NKTD) and 185–193 (GQSGMGKST). Residues cysteine 272, cysteine 277, histidine 279, and cysteine 285 each coordinate Zn(2+).

It belongs to the TRAFAC class YlqF/YawG GTPase family. RsgA subfamily. In terms of assembly, monomer. Associates with 30S ribosomal subunit, binds 16S rRNA. Zn(2+) serves as cofactor.

It is found in the cytoplasm. One of several proteins that assist in the late maturation steps of the functional core of the 30S ribosomal subunit. Helps release RbfA from mature subunits. May play a role in the assembly of ribosomal proteins into the subunit. Circularly permuted GTPase that catalyzes slow GTP hydrolysis, GTPase activity is stimulated by the 30S ribosomal subunit. This Paraburkholderia phytofirmans (strain DSM 17436 / LMG 22146 / PsJN) (Burkholderia phytofirmans) protein is Small ribosomal subunit biogenesis GTPase RsgA.